Here is an 82-residue protein sequence, read N- to C-terminus: MENVLGLVALACGIIIGLGAIGACIGIALMGGKYLEASARQPELMNELQTKMFLLAGLIDAAFLIGVGIAMLFAFANPFVLK.

Helical transmembrane passes span Leu7 to Ile27 and Phe53 to Phe73.

It belongs to the ATPase C chain family. As to quaternary structure, F-type ATPases have 2 components, F(1) - the catalytic core - and F(0) - the membrane proton channel. F(1) has five subunits: alpha(3), beta(3), gamma(1), delta(1), epsilon(1). F(0) has three main subunits: a(1), b(2) and c(10-14). The alpha and beta chains form an alternating ring which encloses part of the gamma chain. F(1) is attached to F(0) by a central stalk formed by the gamma and epsilon chains, while a peripheral stalk is formed by the delta and b chains.

Its subcellular location is the cell inner membrane. F(1)F(0) ATP synthase produces ATP from ADP in the presence of a proton or sodium gradient. F-type ATPases consist of two structural domains, F(1) containing the extramembraneous catalytic core and F(0) containing the membrane proton channel, linked together by a central stalk and a peripheral stalk. During catalysis, ATP synthesis in the catalytic domain of F(1) is coupled via a rotary mechanism of the central stalk subunits to proton translocation. In terms of biological role, key component of the F(0) channel; it plays a direct role in translocation across the membrane. A homomeric c-ring of between 10-14 subunits forms the central stalk rotor element with the F(1) delta and epsilon subunits. The sequence is that of ATP synthase subunit c from Leptothrix cholodnii (strain ATCC 51168 / LMG 8142 / SP-6) (Leptothrix discophora (strain SP-6)).